We begin with the raw amino-acid sequence, 84 residues long: Defensin-like protein 140 (84 aa).

The signal sequence occupies residues 1–28 (MSKSLQLIVTVLCIFTILVLGEICLAKG). 4 cysteine pairs are disulfide-bonded: C37–C81, C46–C65, C51–C75, and C55–C77.

Belongs to the DEFL family.

It is found in the secreted. This Arabidopsis thaliana (Mouse-ear cress) protein is Defensin-like protein 140 (LCR15).